The sequence spans 122 residues: Large ribosomal subunit protein uL14 (122 aa).

The protein belongs to the universal ribosomal protein uL14 family. Part of the 50S ribosomal subunit. Forms a cluster with proteins L3 and L19. In the 70S ribosome, L14 and L19 interact and together make contacts with the 16S rRNA in bridges B5 and B8.

In terms of biological role, binds to 23S rRNA. Forms part of two intersubunit bridges in the 70S ribosome. The sequence is that of Large ribosomal subunit protein uL14 from Desulforamulus reducens (strain ATCC BAA-1160 / DSM 100696 / MI-1) (Desulfotomaculum reducens).